Here is a 1607-residue protein sequence, read N- to C-terminus: Dicer-like protein 1 (1607 aa).

The tract at residues 1–74 is disordered; sequence MNAEMREGSS…PDTKKWIVND (74 aa). The Helicase ATP-binding domain maps to 142 to 324; sequence LFERAKTQNT…IARSPELEGL (183 aa). 155 to 162 serves as a coordination point for ATP; the sequence is LDTGSGKT. Positions 267 to 270 match the DEAH box motif; the sequence is DEAH. A Helicase C-terminal domain is found at 461–632; that stretch reads KVVILLRILR…EALPADRKLT (172 aa). The region spanning 665-755 is the Dicer dsRNA-binding fold domain; sequence SLICLAAFVA…RPTFTKQLPA (91 aa). One can recognise a PAZ domain in the interval 905 to 1040; that stretch reads GAVTFVRDNE…IVLEPLRISP (136 aa). RNase III domains follow at residues 1063 to 1219 and 1272 to 1447; these read LVAL…LTAQ and AARF…VDSR. Positions 1312, 1433, and 1436 each coordinate Mg(2+). One can recognise a DRBM domain in the interval 1478–1556; sequence HPVTFLAGIM…AKKAIQVLEG (79 aa). Zn(2+) contacts are provided by Cys-1493, His-1527, Cys-1568, and Cys-1570.

Belongs to the helicase family. Dicer subfamily. Mg(2+) serves as cofactor. The cofactor is Mn(2+).

Functionally, dicer-like endonuclease involved in cleaving double-stranded RNA in the RNA interference (RNAi) pathway. Produces 21 to 25 bp dsRNAs (siRNAs) which target the selective destruction of homologous RNAs leading to sequence-specific suppression of gene expression, called post-transcriptional gene silencing (PTGS). Part of a broad host defense response against viral infection and transposons. In Chaetomium globosum (strain ATCC 6205 / CBS 148.51 / DSM 1962 / NBRC 6347 / NRRL 1970) (Soil fungus), this protein is Dicer-like protein 1 (DCL1).